The primary structure comprises 1074 residues: Telomerase reverse transcriptase (1074 aa).

The interval 240-265 (DKVSCETMQDGESGKTTLVQKQPGSK) is disordered. Residues 253–262 (GKTTLVQKQP) show a composition bias toward polar residues. A TFLY; involved in RNA binding motif is present at residues 300–305 (TLGFLY). Interaction with RNA template regions lie at residues 355–360 (LPRRFF) and 461–486 (WKIKVNNCDWLKISKTGRVPPSELSY). The region spanning 552 to 877 (TPDQVAALPK…CLFPWCGLLL (326 aa)) is the Reverse transcriptase domain. Mg(2+)-binding residues include Asp-649, Asp-810, and Asp-811.

Belongs to the reverse transcriptase family. Telomerase subfamily. In terms of assembly, catalytic subunit of the telomerase holoenzyme complex composed minimally of TERT and the telomerase RNA template component (TERC). In terms of tissue distribution, detected at highest levels in gill, ovary and testis, and at lower levels in brain, eye, heart, skin, spleen and stomach.

Its subcellular location is the nucleus. The protein localises to the chromosome. It localises to the telomere. It carries out the reaction DNA(n) + a 2'-deoxyribonucleoside 5'-triphosphate = DNA(n+1) + diphosphate. Its function is as follows. Telomerase is a ribonucleoprotein enzyme essential for the replication of chromosome termini in most eukaryotes. It elongates telomeres. It is a reverse transcriptase that adds simple sequence repeats to chromosome ends by copying a template sequence within the RNA component of the enzyme. In Takifugu rubripes (Japanese pufferfish), this protein is Telomerase reverse transcriptase.